The following is a 95-amino-acid chain: MKKLATLTALAGALTMAVATAAQAESKSSSTDNTATPCVGDKCVKTKAAEGKCGEGKCGADKAKSAEGKCGEGKCGADKAKSAEGKCGEGKCGSK.

The segment at residues 1 to 24 (MKKLATLTALAGALTMAVATAAQA) is a signal peptide (or 21). Residues 55 to 89 (EGKCGADKAKSAEGKCGEGKCGADKAKSAEGKCGE) are compositionally biased toward basic and acidic residues. A disordered region spans residues 55-95 (EGKCGADKAKSAEGKCGEGKCGADKAKSAEGKCGEGKCGSK).

This is an uncharacterized protein from Haemophilus influenzae (strain ATCC 51907 / DSM 11121 / KW20 / Rd).